Here is a 352-residue protein sequence, read N- to C-terminus: Serine protease 55 (352 aa).

The N-terminal stretch at 1–18 (MLLFSVLLLLSLVTGTQL) is a signal peptide. Residues 68–300 (ITGGMEAEVG…YNLWIEKVTQ (233 aa)) enclose the Peptidase S1 domain. An intrachain disulfide couples C93 to C109. Catalysis depends on charge relay system residues H108 and D156. Cystine bridges form between C189-C256, C222-C235, and C246-C276. N240 carries an N-linked (GlcNAc...) asparagine glycan. The active-site Charge relay system is the S250. Positions 308–330 (AEKRRTSVKQKPMGSPVSGVPEP) are disordered. Over residues 319 to 330 (PMGSPVSGVPEP) the composition is skewed to low complexity. Residue S325 is the site of GPI-anchor amidated serine attachment. Positions 326–352 (GVPEPGSPRSWLLLCPLSHVLFRAILY) are cleaved as a propeptide — removed in mature form.

Belongs to the peptidase S1 family. Only detected in testis. Expressed in spermatogonia, spermatocytes, spermatids, Leydig and Sertoli cells. Expressed in prostate cancer and ovarian cancer (at protein level).

Its subcellular location is the cell membrane. It is found in the cytoplasm. The protein localises to the cytosol. Functionally, probable serine protease, which plays a crucial role in the fertility of male mice including sperm migration and sperm-egg interaction. The protein is Serine protease 55 (PRSS55) of Homo sapiens (Human).